Reading from the N-terminus, the 153-residue chain is Virion assembly protein OPG100 (153 aa).

It belongs to the orthopoxvirus OPG100 family. As to quaternary structure, homodimer. Part of a complex composed of the kinase OPG054, OPG092, OPG114, OPG115, OPG142 and OPG157. Interacts with OPG175.

Its subcellular location is the virion. It is found in the host cytoplasm. Late protein which is a part of a large complex required for early virion morphogenesis. This complex participates in the formation of virosomes and the incorporation of virosomal contents into nascent immature virions. Plays a role in DNA packaging during immature virions (IV) formation. The chain is Virion assembly protein OPG100 (OPG100) from Vaccinia virus (strain Western Reserve) (VACV).